The following is a 285-amino-acid chain: Bifunctional protein FolD (285 aa).

NADP(+) is bound by residues 169-171 (GRS), Ser-194, and Ile-235.

Belongs to the tetrahydrofolate dehydrogenase/cyclohydrolase family. In terms of assembly, homodimer.

The enzyme catalyses (6R)-5,10-methylene-5,6,7,8-tetrahydrofolate + NADP(+) = (6R)-5,10-methenyltetrahydrofolate + NADPH. It carries out the reaction (6R)-5,10-methenyltetrahydrofolate + H2O = (6R)-10-formyltetrahydrofolate + H(+). The protein operates within one-carbon metabolism; tetrahydrofolate interconversion. Its function is as follows. Catalyzes the oxidation of 5,10-methylenetetrahydrofolate to 5,10-methenyltetrahydrofolate and then the hydrolysis of 5,10-methenyltetrahydrofolate to 10-formyltetrahydrofolate. The chain is Bifunctional protein FolD from Microcystis aeruginosa (strain NIES-843 / IAM M-2473).